A 485-amino-acid polypeptide reads, in one-letter code: MKKQPKMTAIALILSGISGLAYGHGYVSAVENGVAEGRVTLCKFAANGTGEKNTHCGAIQYEPQSVEGPDGFPVTGPRDGKIASAESALAAALDEQTADRWVKRPIQAGPQTFEWTFTANHVTKDWKYYITKPNWNPNQPLSRDAFDLNPFCVVEGNMVQPPKRVNHECIVPEREGYQVILAVWDVGDTAASFYNVIDVKFDGNGPVLPDWNPAGQIIPSMDLSIGDTVYTRVFDNEGENPAYRTELKIDSETLTKANQWSYALATKINQTQKQQRAGQLNGDQFVPVYGTNPIYLKEGSGLKSVEIGYQIEAPQPEYSLTVSGLAKEYEIGEQPIQLDLTLEAQGEMSAELTVYNHHQKPLASWSQAMTDGELKSVTLELSEAKAGHHMLVSRIKDRDGNLQDQQTLDFMLVEPQTPPTPGDYDFVFPNGLKEYVAGTKVLASDGAIYQCKPWPYSGYCQQWTSNATQYQPGTGSHWEMAWDKH.

The first 23 residues, 1–23, serve as a signal peptide directing secretion; the sequence is MKKQPKMTAIALILSGISGLAYG. The region spanning 24 to 201 is the Chitin-binding type-4 domain; that stretch reads HGYVSAVENG…SFYNVIDVKF (178 aa). The Chitin-binding type-3 domain maps to 437–478; that stretch reads AGTKVLASDGAIYQCKPWPYSGYCQQWTSNATQYQPGTGSHW.

It belongs to the GbpA family.

It is found in the secreted. Probably interacts with GlcNAc residues. May promote attachment to both epithelial cell surfaces and chitin. The polypeptide is GlcNAc-binding protein A (Vibrio cholerae serotype O1 (strain M66-2)).